The chain runs to 711 residues: MAFSHDNRVRFKDEGKPLSSEYGYGRKARPSLDRVFKNVKWGFKKPLSFPSHKDPDHKETSSVTRKNIINPQDSFLQNWNKIFLFACVVALAIDPLFFYIPIVDSARHCLTLDSKLEIAASLLRTLIDAFYIIHIVFQFRTAYIAPSSRVFGRGELVDDAKAIALKYLSSYFIIDLLSILPLPQIVVLAVIPSVNQPVSLLTKDYLKFSIIAQYVPRILRMYPLYTEVTRTSGIVTETAWAGAAWNLSLYMLASHVFGALWYLISVEREDRCWQEACEKTKGCNMKFLYCENDRNVSNNFLTTSCPFLDPGDITNSTIFNFGIFTDALKSGVVESHDFWKKFFYCFWWGLRNLSALGQNLQTSKFVGEIIFAISICISGLVLFALLIGNMQKYLESTTVREEEMRVRKRDAEQWMSHRMLPEDLRKRIRRYEQYRWQETRGVEEETLLRNLPKDLRRDIKRHLCLDLLKKVPLFEIMDEQLLDAVCDRLRPVLYTENSYVIREGDPVGEMLFVMRGRLVSATTNGGRSGFFNAVNLKASDFCGEDLLPWALDPQSSSHFPISTRTVQALTEVEAFALTAEDLKSVASQFRRLHSKQLQHTFRFYSVQWRTWSVSFIQAAWRRYCRRKLAKSLRDEEDRLREALASQDKEHNAATVSSSLSLGGALYASRFASNALHNLRHNISNLPPRYTLPLLPQKPTEPDFTANHTTDP.

Topologically, residues 1–81 are cytoplasmic; that stretch reads MAFSHDNRVR…QDSFLQNWNK (81 aa). Residues 82-102 form a helical membrane-spanning segment; that stretch reads IFLFACVVALAIDPLFFYIPI. Residues 103–116 are Extracellular-facing; it reads VDSARHCLTLDSKL. Residues 117–137 form a helical membrane-spanning segment; sequence EIAASLLRTLIDAFYIIHIVF. The Cytoplasmic segment spans residues 138–170; it reads QFRTAYIAPSSRVFGRGELVDDAKAIALKYLSS. Residues 171–191 form a helical membrane-spanning segment; that stretch reads YFIIDLLSILPLPQIVVLAVI. The Extracellular segment spans residues 192–204; the sequence is PSVNQPVSLLTKD. A helical transmembrane segment spans residues 205–225; it reads YLKFSIIAQYVPRILRMYPLY. The Cytoplasmic portion of the chain corresponds to 226–243; it reads TEVTRTSGIVTETAWAGA. Residues 244-264 form a helical membrane-spanning segment; it reads AWNLSLYMLASHVFGALWYLI. Over 265–366 the chain is Extracellular; the sequence is SVEREDRCWQ…GQNLQTSKFV (102 aa). The helical transmembrane segment at 367–387 threads the bilayer; it reads GEIIFAISICISGLVLFALLI. Topologically, residues 388–711 are cytoplasmic; that stretch reads GNMQKYLEST…DFTANHTTDP (324 aa). A nucleoside 3',5'-cyclic phosphate-binding positions include 473-603 and Glu544; that span reads LFEI…TFRF. Residues 589-604 form a calmodulin-binding region; it reads FRRLHSKQLQHTFRFY. The IQ domain maps to 609–638; it reads RTWSVSFIQAAWRRYCRRKLAKSLRDEEDR. The segment at 689–711 is disordered; sequence YTLPLLPQKPTEPDFTANHTTDP.

Belongs to the cyclic nucleotide-gated cation channel (TC 1.A.1.5) family. Homotetramer or heterotetramer.

The protein resides in the cell membrane. Its function is as follows. Probable cyclic nucleotide-gated ion channel. The chain is Probable cyclic nucleotide-gated ion channel 10 (CNGC10) from Arabidopsis thaliana (Mouse-ear cress).